Here is a 214-residue protein sequence, read N- to C-terminus: Ribonuclease T (214 aa).

In terms of domain architecture, Exonuclease spans 20–195; sequence VVVDVETAGF…YDTQKTAELF (176 aa). Mg(2+) contacts are provided by aspartate 23, glutamate 25, histidine 182, and aspartate 187. Histidine 182 acts as the Proton donor/acceptor in catalysis.

Belongs to the RNase T family. Homodimer. Requires Mg(2+) as cofactor.

Trims short 3' overhangs of a variety of RNA species, leaving a one or two nucleotide 3' overhang. Responsible for the end-turnover of tRNA: specifically removes the terminal AMP residue from uncharged tRNA (tRNA-C-C-A). Also appears to be involved in tRNA biosynthesis. This Vibrio parahaemolyticus serotype O3:K6 (strain RIMD 2210633) protein is Ribonuclease T.